The sequence spans 250 residues: MEIDLNADLGEGCGSDEALLDLVSSANIACGWHAGGPNAMRECVRWAVEKGVSIGAHPSFNDPENFGRKEMDLPAGEIYAGVLYQLGALSAIAQAEGGRIAHVKPHGALYNQAARDPKIADAIVSAVHDFDPSVAVFALANSGLVTAARNAGLVAIEEVFADRGYRADGSLVPRKEPGAMLDDEDEVLARTLTMVREQRVQALSGEWVPLNAQTICLHGDGPHALAFARRIRNALEAAGIGVHAANAVRV.

This sequence belongs to the LamB/PxpA family. As to quaternary structure, forms a complex composed of PxpA, PxpB and PxpC.

The enzyme catalyses 5-oxo-L-proline + ATP + 2 H2O = L-glutamate + ADP + phosphate + H(+). Functionally, catalyzes the cleavage of 5-oxoproline to form L-glutamate coupled to the hydrolysis of ATP to ADP and inorganic phosphate. This Paraburkholderia phymatum (strain DSM 17167 / CIP 108236 / LMG 21445 / STM815) (Burkholderia phymatum) protein is 5-oxoprolinase subunit A.